A 557-amino-acid polypeptide reads, in one-letter code: Pre-mRNA-processing protein 45 (557 aa).

Disordered regions lie at residues 1–32 (MALLSEELSSILPNPDFDDEEEDYVERETSHA), 208–243 (EQDPMEPPKFRHKKVPRGPPSPPPPVLHSPPRKVSA), and 316–444 (MAEK…MSSD). The span at 16 to 25 (DFDDEEEDYV) shows a compositional bias: acidic residues. Residues 224–235 (RGPPSPPPPVLH) are compositionally biased toward pro residues. A phosphoserine mark is found at serine 228 and serine 236. Residues 316-327 (MAEKEKQEKEQR) are compositionally biased toward basic and acidic residues. Phosphoserine is present on serine 376. The span at 386 to 430 (EAFRRRQELRRERRRQAEKDLRLSRMGAEKRAKLAEKDRPRDVAE) shows a compositional bias: basic and acidic residues.

This sequence belongs to the SNW family. In terms of assembly, homodimer. Interacts with cyp1 and the small 23 kDa subunit of the splicing factor U2AF (u2af23). Belongs to the 40S cdc5-associated complex (or cwf complex), a spliceosome sub-complex reminiscent of a late-stage spliceosome composed of the U2, U5 and U6 snRNAs and at least brr2, cdc5, cwf2/prp3, cwf3/syf1, cwf4/syf3, cwf5/ecm2, spp42/cwf6, cwf7/spf27, cwf8, cwf9, cwf10, cwf11, cwf12, prp45/cwf13, cwf14, cwf15, cwf16, cwf17, cwf18, cwf19, cwf20, cwf21, cwf22, cwf23, cwf24, cwf25, cwf26, cyp7/cwf27, cwf28, cwf29/ist3, lea1, msl1, prp5/cwf1, prp10, prp12/sap130, prp17, prp22, sap61, sap62, sap114, sap145, slu7, smb1, smd1, smd3, smf1, smg1 and syf2.

It localises to the nucleus. In terms of biological role, involved in pre-mRNA splicing. This is Pre-mRNA-processing protein 45 (prp45) from Schizosaccharomyces pombe (strain 972 / ATCC 24843) (Fission yeast).